Reading from the N-terminus, the 383-residue chain is Acetylornithine deacetylase (383 aa).

H80 serves as a coordination point for Zn(2+). D82 is a catalytic residue. Zn(2+) is bound at residue D112. E144 is an active-site residue. Zn(2+) is bound by residues E145, E169, and H355.

Belongs to the peptidase M20A family. ArgE subfamily. Homodimer. The cofactor is Zn(2+). Co(2+) is required as a cofactor. Glutathione serves as cofactor.

The protein localises to the cytoplasm. It catalyses the reaction N(2)-acetyl-L-ornithine + H2O = L-ornithine + acetate. The protein operates within amino-acid biosynthesis; L-arginine biosynthesis; L-ornithine from N(2)-acetyl-L-ornithine (linear): step 1/1. Its function is as follows. Catalyzes the hydrolysis of the amide bond of N(2)-acetylated L-amino acids. Cleaves the acetyl group from N-acetyl-L-ornithine to form L-ornithine, an intermediate in L-arginine biosynthesis pathway, and a branchpoint in the synthesis of polyamines. This chain is Acetylornithine deacetylase, found in Edwardsiella ictaluri (strain 93-146).